A 254-amino-acid polypeptide reads, in one-letter code: Type III pantothenate kinase (254 aa).

Position 6–13 (6–13 (DVGNSNIV)) interacts with ATP. Residues tyrosine 100 and 107–110 (GADR) each bind substrate. Residue aspartate 109 is the Proton acceptor of the active site. Aspartate 129 lines the K(+) pocket. Threonine 132 contacts ATP. Threonine 184 lines the substrate pocket.

The protein belongs to the type III pantothenate kinase family. In terms of assembly, homodimer. Requires NH4(+) as cofactor. K(+) is required as a cofactor.

The protein localises to the cytoplasm. It carries out the reaction (R)-pantothenate + ATP = (R)-4'-phosphopantothenate + ADP + H(+). It participates in cofactor biosynthesis; coenzyme A biosynthesis; CoA from (R)-pantothenate: step 1/5. Functionally, catalyzes the phosphorylation of pantothenate (Pan), the first step in CoA biosynthesis. This chain is Type III pantothenate kinase, found in Pelobacter propionicus (strain DSM 2379 / NBRC 103807 / OttBd1).